Reading from the N-terminus, the 568-residue chain is Periplasmic trehalase (568 aa).

The signal sequence occupies residues 1–38 (MPHAPARSGDAMSAAAPPCCTSLLGLSLSMFVAPCALA). Substrate contacts are provided by residues R169, 176–177 (WD), N213, 222–224 (RSQ), 294–296 (RPE), and G327. Active-site proton donor/acceptor residues include D329 and E511. E526 contributes to the substrate binding site.

Belongs to the glycosyl hydrolase 37 family.

It is found in the periplasm. It catalyses the reaction alpha,alpha-trehalose + H2O = alpha-D-glucose + beta-D-glucose. Provides the cells with the ability to utilize trehalose at high osmolarity by splitting it into glucose molecules that can subsequently be taken up by the phosphotransferase-mediated uptake system. The chain is Periplasmic trehalase from Xanthomonas campestris pv. campestris (strain B100).